The sequence spans 99 residues: Protein dpy-30 homolog (99 aa).

Met-1 carries the post-translational modification N-acetylmethionine. The tract at residues 1–26 is disordered; sequence MESEQMLEGQTQVAENPHSEYGLTDS. Ser-19 carries the post-translational modification Phosphoserine. An N6-acetyllysine; alternate modification is found at Lys-35. A Glycyl lysine isopeptide (Lys-Gly) (interchain with G-Cter in SUMO2); alternate cross-link involves residue Lys-35.

It belongs to the dpy-30 family. Homodimer. Core component of several methyltransferase-containing complexes including MLL1/MLL, MLL2/3 (also named ASCOM complex) and MLL4/WBP7. Each complex is at least composed of ASH2L, RBBP5, WDR5, DPY30, one or more specific histone methyltransferases (KMT2A/MLL1, KMT2D/MLL2, KMT2C/MLL3 and KMT2B/MLL4), and the facultative components MEN1, HCFC1, HCFC2, NCOA6, KDM6A, PAXIP1/PTIP, PAGR1 and alpha- and beta-tubulin PAXIP1/PTIP, PAGR1 and alpha- and beta-tubulin. Interacts with ASH2L. The interaction with ASH2L is direct. Interacts with ARFGEF1. Component of the SET1 complex, at least composed of the catalytic subunit (SETD1A or SETD1B), WDR5, WDR82, RBBP5, ASH2L/ASH2, CXXC1/CFP1, HCFC1 and DPY30.

It is found in the nucleus. The protein localises to the golgi apparatus. It localises to the trans-Golgi network. As part of the MLL1/MLL complex, involved in the methylation of histone H3 at 'Lys-4', particularly trimethylation. Histone H3 'Lys-4' methylation represents a specific tag for epigenetic transcriptional activation. May play some role in histone H3 acetylation. In embryonic stem (ES) cells, plays a crucial role in the differentiation potential, particularly along the neural lineage, regulating gene induction and histone H3 'Lys-4' methylation at key developmental loci, including that mediated by retinoic acid. Does not affect ES cell self-renewal. May also play an indirect or direct role in endosomal transport. The chain is Protein dpy-30 homolog (Dpy30) from Mus musculus (Mouse).